Reading from the N-terminus, the 1057-residue chain is Carbamoyl phosphate synthase large chain (1057 aa).

Residues 1–401 (MPKRQDIETI…SLLKAIRSLE (401 aa)) are carboxyphosphate synthetic domain. ATP is bound by residues Arg129, Arg169, Gly175, Gly176, Lys208, Ile210, Glu215, Gly241, Ile242, His243, Gln284, and Glu298. The ATP-grasp 1 domain occupies 133-327 (RTLMNDLGVP…IAKLAAKIAI (195 aa)). Mg(2+) is bound by residues Gln284, Glu298, and Asn300. Gln284, Glu298, and Asn300 together coordinate Mn(2+). Residues 402–546 (YGVHHLGLPN…YGTYEYENES (145 aa)) form an oligomerization domain region. The interval 547 to 929 (VVTEKEKILV…ALFKGLTASG (383 aa)) is carbamoyl phosphate synthetic domain. The ATP-grasp 2 domain maps to 671-861 (EALLHTIDVP…MAQLAMRAII (191 aa)). Residues Arg707, Arg746, Leu748, Glu752, Gly777, Val778, His779, Ser780, Gln820, and Glu832 each contribute to the ATP site. Residues Gln820, Glu832, and Asn834 each contribute to the Mg(2+) site. Mn(2+) is bound by residues Gln820, Glu832, and Asn834. The MGS-like domain occupies 930-1057 (MEVKDHGTVL…ESMTFTMKNM (128 aa)). An allosteric domain region spans residues 930–1057 (MEVKDHGTVL…ESMTFTMKNM (128 aa)).

The protein belongs to the CarB family. As to quaternary structure, composed of two chains; the small (or glutamine) chain promotes the hydrolysis of glutamine to ammonia, which is used by the large (or ammonia) chain to synthesize carbamoyl phosphate. Tetramer of heterodimers (alpha,beta)4. Mg(2+) serves as cofactor. The cofactor is Mn(2+).

It catalyses the reaction hydrogencarbonate + L-glutamine + 2 ATP + H2O = carbamoyl phosphate + L-glutamate + 2 ADP + phosphate + 2 H(+). The catalysed reaction is hydrogencarbonate + NH4(+) + 2 ATP = carbamoyl phosphate + 2 ADP + phosphate + 2 H(+). It participates in amino-acid biosynthesis; L-arginine biosynthesis; carbamoyl phosphate from bicarbonate: step 1/1. The protein operates within pyrimidine metabolism; UMP biosynthesis via de novo pathway; (S)-dihydroorotate from bicarbonate: step 1/3. Large subunit of the glutamine-dependent carbamoyl phosphate synthetase (CPSase). CPSase catalyzes the formation of carbamoyl phosphate from the ammonia moiety of glutamine, carbonate, and phosphate donated by ATP, constituting the first step of 2 biosynthetic pathways, one leading to arginine and/or urea and the other to pyrimidine nucleotides. The large subunit (synthetase) binds the substrates ammonia (free or transferred from glutamine from the small subunit), hydrogencarbonate and ATP and carries out an ATP-coupled ligase reaction, activating hydrogencarbonate by forming carboxy phosphate which reacts with ammonia to form carbamoyl phosphate. This chain is Carbamoyl phosphate synthase large chain, found in Staphylococcus saprophyticus subsp. saprophyticus (strain ATCC 15305 / DSM 20229 / NCIMB 8711 / NCTC 7292 / S-41).